The primary structure comprises 233 residues: Large ribosomal subunit protein uL1 (233 aa).

This sequence belongs to the universal ribosomal protein uL1 family. In terms of assembly, part of the 50S ribosomal subunit.

Its function is as follows. Binds directly to 23S rRNA. The L1 stalk is quite mobile in the ribosome, and is involved in E site tRNA release. Functionally, protein L1 is also a translational repressor protein, it controls the translation of the L11 operon by binding to its mRNA. This Brucella melitensis biotype 1 (strain ATCC 23456 / CCUG 17765 / NCTC 10094 / 16M) protein is Large ribosomal subunit protein uL1.